Reading from the N-terminus, the 394-residue chain is MSKEKFERVKPHVNVGTIGHVDHGKTTLTAAICTTLAKVYGGAARDFASIDNAPEERERGITISTSHVEYDTPARHYAHVDCPGHADYVKNMITGAAQMDGGILVVAATDGPMPQTREHILLGRQVGIPYIIVFMNKCDMVDDEELLELVEMEVRELLSEYDFPGDDLPVIQGSALGALNGEEQWEAKIIELAEALDTYIPEPERAIDLPFLMPIEDVFSIQGRGTVVTGRIERGILKVGDEVAIVGIKDTTTTTCTGVEMFRKLLDEGRAGENVGALLRGTKRDEVERGQVLAKPGSITPHTKFESEVYVLSKDEGGRHTPFFKGYRPQFYFRTTDVTGDISLPEGVEMVMPGDNIQMVVELISPIAMDEGLRFAIREGGRTVGAGVVAKIFE.

The 195-residue stretch at 10–204 (KPHVNVGTIG…ALDTYIPEPE (195 aa)) folds into the tr-type G domain. Residues 19 to 26 (GHVDHGKT) form a G1 region. GTP is bound at residue 19 to 26 (GHVDHGKT). Threonine 26 provides a ligand contact to Mg(2+). The G2 stretch occupies residues 60–64 (GITIS). Residues 81 to 84 (DCPG) form a G3 region. GTP-binding positions include 81 to 85 (DCPGH) and 136 to 139 (NKCD). Residues 136–139 (NKCD) are G4. A G5 region spans residues 174–176 (SAL).

This sequence belongs to the TRAFAC class translation factor GTPase superfamily. Classic translation factor GTPase family. EF-Tu/EF-1A subfamily. Monomer.

It localises to the cytoplasm. The catalysed reaction is GTP + H2O = GDP + phosphate + H(+). In terms of biological role, GTP hydrolase that promotes the GTP-dependent binding of aminoacyl-tRNA to the A-site of ribosomes during protein biosynthesis. The sequence is that of Elongation factor Tu 1 from Vibrio vulnificus (strain CMCP6).